Reading from the N-terminus, the 677-residue chain is Methionine--tRNA ligase (677 aa).

Positions 15–25 (PYANGSIHLGH) match the 'HIGH' region motif. Residues Cys-146, Cys-149, Cys-159, and Cys-162 each contribute to the Zn(2+) site. The 'KMSKS' region motif lies at 333 to 337 (KMSKS). Residue Lys-336 coordinates ATP. Residues 575–677 (DFAKVDLRVA…AGAKPGHQVK (103 aa)) form the tRNA-binding domain.

The protein belongs to the class-I aminoacyl-tRNA synthetase family. MetG type 1 subfamily. Homodimer. Zn(2+) serves as cofactor.

The protein resides in the cytoplasm. The enzyme catalyses tRNA(Met) + L-methionine + ATP = L-methionyl-tRNA(Met) + AMP + diphosphate. Its function is as follows. Is required not only for elongation of protein synthesis but also for the initiation of all mRNA translation through initiator tRNA(fMet) aminoacylation. The protein is Methionine--tRNA ligase (metG) of Escherichia coli (strain K12).